We begin with the raw amino-acid sequence, 505 residues long: Calcium/calmodulin-dependent protein kinase kinase 1 (505 aa).

Positions 28 to 66 are disordered; the sequence is LEEADEGPEPARNGVDPPPRARAASVIPGSASRPTPVRP. Phosphoserine occurs at positions 67 and 74. The residue at position 78 (Arg-78) is an Asymmetric dimethylarginine. The disordered stretch occupies residues 84 to 105; sequence LGAQVGPYSTGPASHISPRSWR. The residue at position 100 (Ser-100) is a Phosphoserine. Position 108 is a phosphothreonine (Thr-108). The 282-residue stretch at 128–409 folds into the Protein kinase domain; it reads YKLQSEIGKG…VSDIKLHPWV (282 aa). ATP contacts are provided by residues 134 to 142 and Lys-157; that span reads IGKGAYGVV. The RP domain stretch occupies residues 167-189; it reads QYGFPRRPPPRGSQATQGGPAKQ. Residue Asp-275 is the Proton acceptor of the active site. The autoinhibitory domain stretch occupies residues 435–440; sequence KNSVRL. A calmodulin-binding region spans residues 438–463; sequence VRLIPSWTTVILVKSMLRKRSFGNPF. Phosphoserine is present on residues Ser-458, Ser-475, and Ser-492. The segment at 460-505 is disordered; the sequence is GNPFEPQARREERSMSAPGSLLMKEGCGEGCKSPELPGVQEDEAAS.

The protein belongs to the protein kinase superfamily. Ser/Thr protein kinase family. Interacts with CAMK4 and calmodulin. Appears to be autophosphorylated in a Ca(2+)/calmodulin-dependent manner. Phosphorylated at multiple sites by PRCAKA/PKA. Phosphorylation of Ser-458 is blocked upon binding to Ca(2+)/calmodulin. In vitro, phosphorylated by CAMK1 and CAMK4. In terms of tissue distribution, widely expressed. Differentially expressed in various brain regions.

The protein localises to the cytoplasm. Its subcellular location is the nucleus. It catalyses the reaction L-seryl-[protein] + ATP = O-phospho-L-seryl-[protein] + ADP + H(+). The enzyme catalyses L-threonyl-[protein] + ATP = O-phospho-L-threonyl-[protein] + ADP + H(+). With respect to regulation, activated by Ca(2+)/calmodulin. Binding of calmodulin may relieve intrasteric autoinhibition. Partially inhibited upon phosphorylation by PRCAKA/PKA. May be regulated through phosphorylation by CAMK1 and CAMK4. Calcium/calmodulin-dependent protein kinase that belongs to a proposed calcium-triggered signaling cascade involved in a number of cellular processes. Phosphorylates CAMK1, CAMK1D, CAMK1G and CAMK4. Involved in regulating cell apoptosis. Promotes cell survival by phosphorylating AKT1/PKB that inhibits pro-apoptotic BAD/Bcl2-antagonist of cell death. The polypeptide is Calcium/calmodulin-dependent protein kinase kinase 1 (Camkk1) (Mus musculus (Mouse)).